The chain runs to 398 residues: Candidapepsin-2 (398 aa).

A signal peptide spans 1–18 (MFLKNIFIGLAIALLVDA). A propeptide spans 19 to 56 (TPTTTKRSAGFVALDFSVVKTPKAFPVTNGQEGKTSKR) (activation peptide). One can recognise a Peptidase A1 domain in the interval 70–384 (YAADITVGSN…DLDNNEISLA (315 aa)). Asp-88 is a catalytic residue. Residue 88–90 (DTG) coordinates pepstatin A. Cys-103 and Cys-115 are oxidised to a cystine. Residues 141–142 (GD) and 274–278 (DSGTT) each bind pepstatin A. The active site involves Asp-274. A disulfide bridge connects residues Cys-312 and Cys-350. Asn-313 and Asn-321 each carry an N-linked (GlcNAc...) asparagine glycan.

Belongs to the peptidase A1 family. In terms of assembly, monomer. Post-translationally, O-glycosylated.

It is found in the secreted. The enzyme catalyses Preferential cleavage at the carboxyl of hydrophobic amino acids, but fails to cleave 15-Leu-|-Tyr-16, 16-Tyr-|-Leu-17 and 24-Phe-|-Phe-25 of insulin B chain. Activates trypsinogen, and degrades keratin.. The sequence is that of Candidapepsin-2 (SAP2) from Candida albicans (strain WO-1) (Yeast).